The following is a 105-amino-acid chain: MIPGEIQVAEGVIELNVGRKTVKIRVENTGDRPVQIGSHYHFYEVNPALSFDRELTKGFRLNIASGTAVRFEPGQGREVELVEYAGTKTIYGFRGEVMGKLVGAE.

This sequence belongs to the urease beta subunit family. Heterotrimer of UreA (gamma), UreB (beta) and UreC (alpha) subunits. Three heterotrimers associate to form the active enzyme.

The protein localises to the cytoplasm. It catalyses the reaction urea + 2 H2O + H(+) = hydrogencarbonate + 2 NH4(+). It participates in nitrogen metabolism; urea degradation; CO(2) and NH(3) from urea (urease route): step 1/1. The sequence is that of Urease subunit beta from Marinomonas sp. (strain MWYL1).